The primary structure comprises 208 residues: Protein-L-isoaspartate O-methyltransferase (208 aa).

The active site involves Ser-59.

The protein belongs to the methyltransferase superfamily. L-isoaspartyl/D-aspartyl protein methyltransferase family.

Its subcellular location is the cytoplasm. The catalysed reaction is [protein]-L-isoaspartate + S-adenosyl-L-methionine = [protein]-L-isoaspartate alpha-methyl ester + S-adenosyl-L-homocysteine. In terms of biological role, catalyzes the methyl esterification of L-isoaspartyl residues in peptides and proteins that result from spontaneous decomposition of normal L-aspartyl and L-asparaginyl residues. It plays a role in the repair and/or degradation of damaged proteins. The protein is Protein-L-isoaspartate O-methyltransferase of Photorhabdus laumondii subsp. laumondii (strain DSM 15139 / CIP 105565 / TT01) (Photorhabdus luminescens subsp. laumondii).